We begin with the raw amino-acid sequence, 167 residues long: Novel acetylcholine receptor chaperone (167 aa).

At Met-1–Arg-5 the chain is on the cytoplasmic side. Residues Thr-6–Ile-26 traverse the membrane as a helical segment. Residues Lys-27 to Ser-61 lie on the Lumenal side of the membrane. An interaction with NGFR region spans residues Ala-43–Leu-54. Residues Ile-62–Val-82 traverse the membrane as a helical segment. The Cytoplasmic portion of the chain corresponds to Pro-83–Asp-88. Residues Val-89–Gly-109 form a helical membrane-spanning segment. Residues Asp-110–Arg-114 are Lumenal-facing. A helical transmembrane segment spans residues Tyr-115–Ala-132. Residues Arg-133 to Ser-167 lie on the Cytoplasmic side of the membrane. Residues Pro-135 to Leu-145 are compositionally biased toward basic and acidic residues. Residues Pro-135 to Ser-167 form a disordered region.

Belongs to the DoxX family. As to quaternary structure, may interact with NGFR. Interacts with RPN1, RPN2 and CANX. Brain (at protein level). Expressed in the spinal cord dorsal horn (at protein level).

It localises to the peroxisome membrane. Its subcellular location is the cytoplasmic vesicle. The protein resides in the endoplasmic reticulum membrane. Molecular chaperone which mediates the proper assembly and functional expression of the nicotinic acetylcholine receptors (nAChRs) throughout the brain. Essential for the proper folding, assembly, function and surface trafficking of alpha-7 (CHRNA7), alpha-4-beta-2, alpha-3-beta-2 and alpha-3-beta-4 receptors. Stably associates with ribophorin-1 (RPN1) and ribophorin-2 (RPN2) (components of the oligosaccharyl transferase (OST) complex) and with calnexin (CANX), both of which are critical for NACHO-mediated effects on CHRNA7 assembly and function. Facilitates the proper folding and assembly of alpha-6-beta-2 and alpha-6-beta-2-beta-3 receptors and acts at early stages of the nAChRs subunit assembly. Promotes the expression of the alpha-4(2):beta-2(3) stoichiometric form over the alpha-4(3):beta-2(2) form. The sequence is that of Novel acetylcholine receptor chaperone from Mus musculus (Mouse).